The chain runs to 157 residues: Transcription initiation factor IIA large subunit (157 aa).

This sequence belongs to the TFIIA subunit 1 family. As to quaternary structure, TFIIA is a heterodimer of the large subunit and the small subunit gamma.

It is found in the nucleus. Its function is as follows. TFIIA is a component of the transcription machinery of RNA polymerase II and plays an important role in transcriptional activation. The chain is Transcription initiation factor IIA large subunit (TOA1) from Encephalitozoon cuniculi (strain GB-M1) (Microsporidian parasite).